The sequence spans 315 residues: Probable cell division protein WhiA (315 aa).

The H-T-H motif DNA-binding region spans 280 to 313 (SLKELGDLLDPPLSKSGVAYRMRKLEESVKEILQ).

This sequence belongs to the WhiA family.

Functionally, involved in cell division and chromosome segregation. The polypeptide is Probable cell division protein WhiA (Syntrophomonas wolfei subsp. wolfei (strain DSM 2245B / Goettingen)).